The following is a 532-amino-acid chain: Vesicular acetylcholine transporter (532 aa).

Residues 1–33 (MESAEPAGQARAAATKLSEAVGAALQEPRRQRR) are Cytoplasmic-facing. The chain crosses the membrane as a helical span at residues 34–54 (LVLVIVCVALLLDNMLYMVIV). The Lumenal, vesicle segment spans residues 55–125 (PIVPDYIAHM…PTESEDVKIG (71 aa)). Asn89 and Asn96 each carry an N-linked (GlcNAc...) asparagine glycan. Residues 126–146 (VLFASKAILQLLVNPLSGPFI) traverse the membrane as a helical segment. Topologically, residues 147-152 (DRMSYD) are cytoplasmic. The helical transmembrane segment at 153–173 (VPLLIGLGVMFASTVLFAFAE) threads the bilayer. Over 174–182 (DYATLFAAR) the chain is Lumenal, vesicle. Residues 183 to 203 (SLQGLGSAFADTSGIAMIADK) form a helical membrane-spanning segment. At 204-213 (YPEEPERSRA) the chain is on the cytoplasmic side. Residues 214–234 (LGVALAFISFGSLVAPPFGGI) form a helical membrane-spanning segment. The Lumenal, vesicle segment spans residues 235–242 (LYEFAGKR). The helical transmembrane segment at 243 to 263 (VPFLVLAAVSLFDALLLLAVA) threads the bilayer. Over 264 to 289 (KPFSAAARARANLPVGTPIHRLMLDP) the chain is Cytoplasmic. A helical membrane pass occupies residues 290–310 (YIAVVAGALTTCNIPLAFLEP). Topologically, residues 311-325 (TIATWMKHTMAASEW) are lumenal, vesicle. A helical membrane pass occupies residues 326 to 346 (EMGMAWLPAFVPHVLGVYLTV). Topologically, residues 347–356 (RLAARYPHLQ) are cytoplasmic. The helical transmembrane segment at 357-377 (WLYGALGLAVIGASSCIVPAC) threads the bilayer. The Lumenal, vesicle portion of the chain corresponds to 378-388 (RSFAPLVVSLC). A helical membrane pass occupies residues 389–409 (GLCFGIALVDTALLPTLAFLV). Topologically, residues 410 to 422 (DVRHVSVYGSVYA) are cytoplasmic. The chain crosses the membrane as a helical span at residues 423-443 (IADISYSVAYALGPIVAGHIV). The Lumenal, vesicle segment spans residues 444–447 (HSLG). Residues 448 to 468 (FEQLSLGMGLANLLYAPVLLL) traverse the membrane as a helical segment. Residues 469 to 532 (LRNVGLLTRS…DDYNYYYTRS (64 aa)) lie on the Cytoplasmic side of the membrane. The tract at residues 471–532 (NVGLLTRSRS…DDYNYYYTRS (62 aa)) is mediates interaction with SEC14L1. Residues 502-523 (RPVSGQDGEPRSPPGPFDACED) form a disordered region.

This sequence belongs to the major facilitator superfamily. Vesicular transporter family. In terms of assembly, interacts with SEC14L1. In terms of tissue distribution, peripheral and central cholinergic nervous systems.

The protein resides in the cytoplasmic vesicle. It localises to the secretory vesicle. Its subcellular location is the synaptic vesicle membrane. The enzyme catalyses acetylcholine(out) + 2 H(+)(in) = acetylcholine(in) + 2 H(+)(out). It catalyses the reaction choline(in) + 2 H(+)(out) = choline(out) + 2 H(+)(in). It carries out the reaction serotonin(in) + 2 H(+)(out) = serotonin(out) + 2 H(+)(in). Its activity is regulated as follows. Potently inhibited by L-vesamicol, reserpine and tetrabenazine. Its function is as follows. Electrogenic antiporter that exchanges one cholinergic neurotransmitter, acetylcholine or choline, with two intravesicular protons across the membrane of synaptic vesicles. Uses the electrochemical proton gradient established by the V-type proton-pump ATPase to store neurotransmitters inside the vesicles prior to their release via exocytosis. Determines cholinergic vesicular quantal size at presynaptic nerve terminals in developing neuro-muscular junctions with an impact on motor neuron differentiation and innervation pattern. Part of forebrain cholinergic system, regulates hippocampal synapse transmissions that underlie spatial memory formation. Can transport serotonin. The protein is Vesicular acetylcholine transporter (SLC18A3) of Homo sapiens (Human).